The following is a 334-amino-acid chain: Dipeptide transport ATP-binding protein DppF (334 aa).

The region spanning 13–262 is the ABC transporter domain; that stretch reads LQAIDLKKHY…PRHPYTQALL (250 aa). An ATP-binding site is contributed by 55–62; it reads GESGCGKS.

Belongs to the ABC transporter superfamily. In terms of assembly, the complex is composed of two ATP-binding proteins (DppD and DppF), two transmembrane proteins (DppB and DppC) and a solute-binding protein (DppA). MppA can replace DppA as binding protein for heme and ALA transport.

It is found in the cell inner membrane. It catalyses the reaction a dipeptide(out) + ATP + H2O = a dipeptide(in) + ADP + phosphate + H(+). Part of the ABC transporter DppABCDF involved in dipeptide transport. Responsible for energy coupling to the transport system. In terms of biological role, when a foreign outer membrane heme receptor is expressed in E.coli, DppABCDF can also transport heme and its precursor, 5-aminolevulinic acid (ALA), from the periplasm into the cytoplasm. This Escherichia coli (strain K12) protein is Dipeptide transport ATP-binding protein DppF (dppF).